We begin with the raw amino-acid sequence, 205 residues long: tRNA (guanine-N(7)-)-methyltransferase (205 aa).

Glutamate 34, glutamate 59, aspartate 86, and aspartate 107 together coordinate S-adenosyl-L-methionine. Aspartate 107 is a catalytic residue. Substrate is bound at residue lysine 111. Residues 113 to 118 form an interaction with RNA region; sequence RHEKRR. Residues aspartate 144 and 182-185 contribute to the substrate site; that span reads TGYE.

The protein belongs to the class I-like SAM-binding methyltransferase superfamily. TrmB family.

The catalysed reaction is guanosine(46) in tRNA + S-adenosyl-L-methionine = N(7)-methylguanosine(46) in tRNA + S-adenosyl-L-homocysteine. It participates in tRNA modification; N(7)-methylguanine-tRNA biosynthesis. Its function is as follows. Catalyzes the formation of N(7)-methylguanine at position 46 (m7G46) in tRNA. This is tRNA (guanine-N(7)-)-methyltransferase from Mycoplasmopsis synoviae (strain 53) (Mycoplasma synoviae).